A 253-amino-acid chain; its full sequence is Kallikrein-7 (253 aa).

Residues 1–22 (MARSLLLPLQILLLSLALETAG) form the signal peptide. The propeptide at 23–29 (EEAQGDK) is activation peptide. The 221-residue stretch at 30–250 (IIDGAPCARG…FTKWINDTMK (221 aa)) folds into the Peptidase S1 domain. 6 disulfides stabilise this stretch: Cys36-Cys165, Cys55-Cys71, Cys137-Cys239, Cys144-Cys211, Cys176-Cys190, and Cys201-Cys226. Active-site charge relay system residues include His70 and Asp112. Ser205 (charge relay system) is an active-site residue. Asn246 carries N-linked (GlcNAc...) asparagine glycosylation.

The protein belongs to the peptidase S1 family. Kallikrein subfamily. As to expression, abundantly expressed in the skin and is expressed by keratinocytes in the epidermis. Also expressed in the brain, mammary gland, cerebellum, spinal cord and kidney. Lower levels in salivary glands, uterus, thymus, thyroid, placenta, trachea and testis. Up-regulated in ovarian carcinoma, especially late-stage serous carcinoma, compared with normal ovaries and benign adenomas (at protein level).

Its subcellular location is the secreted. It catalyses the reaction Cleavage of proteins with aromatic side chains in the P1 position.. Its activity is regulated as follows. Inhibited by Zn2+ and Cu2+ at low micromolar concentrations. Inhibited by SERPINA12. May catalyze the degradation of intercellular cohesive structures in the cornified layer of the skin in the continuous shedding of cells from the skin surface. Specific for amino acid residues with aromatic side chains in the P1 position. Cleaves insulin A chain at '14-Tyr-|-Gln-15' and insulin B chain at '6-Leu-|-Cys-7', '16-Tyr-|-Leu-17', '25-Phe-|-Tyr-26' and '26-Tyr-|-Thr-27'. Could play a role in the activation of precursors to inflammatory cytokines. The protein is Kallikrein-7 (KLK7) of Homo sapiens (Human).